Here is a 275-residue protein sequence, read N- to C-terminus: Large ribosomal subunit protein uL2 (275 aa).

Disordered stretches follow at residues 36 to 55 and 223 to 275; these read PKKRGSGRNNNGHITVRHKG and VVMN…RHAR.

This sequence belongs to the universal ribosomal protein uL2 family. As to quaternary structure, part of the 50S ribosomal subunit. Forms a bridge to the 30S subunit in the 70S ribosome.

One of the primary rRNA binding proteins. Required for association of the 30S and 50S subunits to form the 70S ribosome, for tRNA binding and peptide bond formation. It has been suggested to have peptidyltransferase activity; this is somewhat controversial. Makes several contacts with the 16S rRNA in the 70S ribosome. This Thiobacillus denitrificans (strain ATCC 25259 / T1) protein is Large ribosomal subunit protein uL2.